The following is a 78-amino-acid chain: UPF0291 protein MCCL_0996 (78 aa).

Belongs to the UPF0291 family.

The protein resides in the cytoplasm. The sequence is that of UPF0291 protein MCCL_0996 from Macrococcus caseolyticus (strain JCSC5402) (Macrococcoides caseolyticum).